A 59-amino-acid chain; its full sequence is Large ribosomal subunit protein bL32 (59 aa).

The protein belongs to the bacterial ribosomal protein bL32 family.

The protein is Large ribosomal subunit protein bL32 of Desulfitobacterium hafniense (strain Y51).